The sequence spans 173 residues: Alpha-crystallin A chain (173 aa).

Position 1 is an N-acetylmethionine (M1). Residues 1-63 form a required for complex formation with BFSP1 and BFSP2 region; the sequence is MDVTIQHPWF…RTVLDSGISE (63 aa). The residue at position 6 (Q6) is a Deamidated glutamine; partial. The residue at position 45 (S45) is a Phosphoserine. Deamidated glutamine; partial occurs at positions 50 and 90. In terms of domain architecture, sHSP spans 52–162; that stretch reads LFRTVLDSGI…SHSERAIPVS (111 aa). Position 99 is an N6-acetyllysine (K99). Residue H100 coordinates Zn(2+). N101 carries the post-translational modification Deamidated asparagine; partial. 2 residues coordinate Zn(2+): E102 and H107. Residue S122 is modified to Phosphoserine. The residue at position 123 (N123) is a Deamidated asparagine; partial. A disulfide bond links C131 and C142. Position 147 is a deamidated glutamine; partial (Q147). The disordered stretch occupies residues 149–173; that stretch reads GMDASHSERAIPVSREEKPSSAPSS. Basic and acidic residues predominate over residues 153 to 167; it reads SHSERAIPVSREEKP. Residue H154 participates in Zn(2+) binding. S162 carries an O-linked (GlcNAc) serine glycan.

It belongs to the small heat shock protein (HSP20) family. In terms of assembly, heteromer composed of three CRYAA and one CRYAB subunits. Inter-subunit bridging via zinc ions enhances stability, which is crucial as there is no protein turn over in the lens. Can also form homodimers and homotetramers (dimers of dimers) which serve as the building blocks of homooligomers. Within homooligomers, the zinc-binding motif is created from residues of 3 different molecules. His-100 and Glu-102 from one molecule are ligands of the zinc ion, and His-107 and His-154 residues from additional molecules complete the site with tetrahedral coordination geometry. Part of a complex required for lens intermediate filament formation composed of BFSP1, BFSP2 and CRYAA. Undergoes age-dependent proteolytical cleavage at the C-terminus.

The protein resides in the cytoplasm. It is found in the nucleus. Its function is as follows. Contributes to the transparency and refractive index of the lens. In its oxidized form (absence of intramolecular disulfide bond), acts as a chaperone, preventing aggregation of various proteins under a wide range of stress conditions. Required for the correct formation of lens intermediate filaments as part of a complex composed of BFSP1, BFSP2 and CRYAA. The sequence is that of Alpha-crystallin A chain (CRYAA) from Loxodonta africana (African elephant).